Consider the following 225-residue polypeptide: NAD(P)H-quinone oxidoreductase subunit K, chloroplastic (225 aa).

Cys43, Cys44, Cys108, and Cys139 together coordinate [4Fe-4S] cluster.

Belongs to the complex I 20 kDa subunit family. In terms of assembly, NDH is composed of at least 16 different subunits, 5 of which are encoded in the nucleus. [4Fe-4S] cluster serves as cofactor.

The protein localises to the plastid. The protein resides in the chloroplast thylakoid membrane. It catalyses the reaction a plastoquinone + NADH + (n+1) H(+)(in) = a plastoquinol + NAD(+) + n H(+)(out). The enzyme catalyses a plastoquinone + NADPH + (n+1) H(+)(in) = a plastoquinol + NADP(+) + n H(+)(out). In terms of biological role, NDH shuttles electrons from NAD(P)H:plastoquinone, via FMN and iron-sulfur (Fe-S) centers, to quinones in the photosynthetic chain and possibly in a chloroplast respiratory chain. The immediate electron acceptor for the enzyme in this species is believed to be plastoquinone. Couples the redox reaction to proton translocation, and thus conserves the redox energy in a proton gradient. The protein is NAD(P)H-quinone oxidoreductase subunit K, chloroplastic of Lobularia maritima (Sweet alyssum).